Here is a 217-residue protein sequence, read N- to C-terminus: Ribonuclease T (217 aa).

The Exonuclease domain maps to 20 to 195 (VVVDVETAGL…YDTERTAMLF (176 aa)). Mg(2+) contacts are provided by aspartate 23, glutamate 25, histidine 182, and aspartate 187. Histidine 182 acts as the Proton donor/acceptor in catalysis.

The protein belongs to the RNase T family. In terms of assembly, homodimer. The cofactor is Mg(2+).

In terms of biological role, trims short 3' overhangs of a variety of RNA species, leaving a one or two nucleotide 3' overhang. Responsible for the end-turnover of tRNA: specifically removes the terminal AMP residue from uncharged tRNA (tRNA-C-C-A). Also appears to be involved in tRNA biosynthesis. The polypeptide is Ribonuclease T (Blochmanniella pennsylvanica (strain BPEN)).